We begin with the raw amino-acid sequence, 325 residues long: Lipoyl synthase (325 aa).

The disordered stretch occupies residues Met-1 to Arg-33. Over residues Leu-8–Arg-33 the composition is skewed to basic and acidic residues. 7 residues coordinate [4Fe-4S] cluster: Cys-64, Cys-69, Cys-75, Cys-90, Cys-94, Cys-97, and Ser-303. The region spanning Trp-76–Leu-292 is the Radical SAM core domain.

It belongs to the radical SAM superfamily. Lipoyl synthase family. It depends on [4Fe-4S] cluster as a cofactor.

Its subcellular location is the cytoplasm. It carries out the reaction [[Fe-S] cluster scaffold protein carrying a second [4Fe-4S](2+) cluster] + N(6)-octanoyl-L-lysyl-[protein] + 2 oxidized [2Fe-2S]-[ferredoxin] + 2 S-adenosyl-L-methionine + 4 H(+) = [[Fe-S] cluster scaffold protein] + N(6)-[(R)-dihydrolipoyl]-L-lysyl-[protein] + 4 Fe(3+) + 2 hydrogen sulfide + 2 5'-deoxyadenosine + 2 L-methionine + 2 reduced [2Fe-2S]-[ferredoxin]. Its pathway is protein modification; protein lipoylation via endogenous pathway; protein N(6)-(lipoyl)lysine from octanoyl-[acyl-carrier-protein]: step 2/2. In terms of biological role, catalyzes the radical-mediated insertion of two sulfur atoms into the C-6 and C-8 positions of the octanoyl moiety bound to the lipoyl domains of lipoate-dependent enzymes, thereby converting the octanoylated domains into lipoylated derivatives. This Caulobacter vibrioides (strain ATCC 19089 / CIP 103742 / CB 15) (Caulobacter crescentus) protein is Lipoyl synthase.